A 143-amino-acid polypeptide reads, in one-letter code: Transcriptional regulator MraZ (143 aa).

SpoVT-AbrB domains follow at residues 5 to 47 (EYQH…PMSE) and 76 to 119 (ATEC…SKEI).

The protein belongs to the MraZ family. In terms of assembly, forms oligomers.

It localises to the cytoplasm. The protein localises to the nucleoid. This chain is Transcriptional regulator MraZ, found in Bacillus licheniformis (strain ATCC 14580 / DSM 13 / JCM 2505 / CCUG 7422 / NBRC 12200 / NCIMB 9375 / NCTC 10341 / NRRL NRS-1264 / Gibson 46).